The chain runs to 29 residues: Cytochrome b6-f complex subunit 8 (29 aa).

The chain crosses the membrane as a helical span at residues 3 to 23 (IVSFAWAALMVVFTFSLSLVV).

Belongs to the PetN family. As to quaternary structure, the 4 large subunits of the cytochrome b6-f complex are cytochrome b6, subunit IV (17 kDa polypeptide, PetD), cytochrome f and the Rieske protein, while the 4 small subunits are PetG, PetL, PetM and PetN. The complex functions as a dimer.

Its subcellular location is the plastid. It is found in the chloroplast thylakoid membrane. Component of the cytochrome b6-f complex, which mediates electron transfer between photosystem II (PSII) and photosystem I (PSI), cyclic electron flow around PSI, and state transitions. This is Cytochrome b6-f complex subunit 8 from Phalaenopsis aphrodite subsp. formosana (Moth orchid).